We begin with the raw amino-acid sequence, 813 residues long: Fibroblast growth factor receptor 2 (813 aa).

A signal peptide spans 1 to 14 (MLLLALLAFLLVSR). Topologically, residues 18–367 (RPSYSMVDDT…EDNPVPYYME (350 aa)) are extracellular. The 97-residue stretch at 21–117 (YSMVDDTTPE…NSHFFHVNVT (97 aa)) folds into the Ig-like C2-type 1 domain. The cysteines at positions 58 and 103 are disulfide-linked. Asn79 and Asn115 each carry an N-linked (GlcNAc...) asparagine glycan. Residues 119 to 143 (ASSSGDDEDDNDGSEDFTNDNNNIR) are disordered. Over residues 123 to 136 (GDDEDDNDGSEDFT) the composition is skewed to acidic residues. Ig-like C2-type domains follow at residues 145-237 (PYWT…YHLD) and 246-348 (PILQ…AWLT). A heparin-binding region spans residues 152–169 (KMEKKLHAVSAANTVKLR). Cys170 and Cys221 form a disulfide bridge. 5 N-linked (GlcNAc...) asparagine glycosylation sites follow: Asn231, Asn255, Asn287, Asn308, and Asn321. A disulfide bond links Cys268 and Cys332. Residues 368–388 (IGIYSTGIFIIFCMVVVCVVC) traverse the membrane as a helical segment. Over 389–813 (RMRQGAKKKK…FQHVNGVVKT (425 aa)) the chain is Cytoplasmic. Phosphotyrosine; by autocatalysis is present on Tyr456. One can recognise a Protein kinase domain in the interval 471 to 760 (LTLGKPLGEG…LTLTTNEEYL (290 aa)). ATP is bound by residues 477–485 (LGEGCFGQV), Lys507, 555–557 (EYA), and Asn561. Position 576 is a phosphotyrosine; by autocatalysis (Tyr576). The active-site Proton acceptor is Asp616. Phosphotyrosine; by autocatalysis is present on residues Tyr646, Tyr647, and Tyr759. The span at 771–792 (PSFPDSSCSASSSSGDDSVFSP) shows a compositional bias: low complexity. Residues 771–801 (PSFPDSSCSASSSSGDDSVFSPDPMPHDPCL) are disordered.

It belongs to the protein kinase superfamily. Tyr protein kinase family. Fibroblast growth factor receptor subfamily. In terms of assembly, monomer. Homodimer after ligand binding. Post-translationally, autophosphorylated. Binding of FGF family members together with heparan sulfate proteoglycan or heparin promotes receptor dimerization and autophosphorylation on tyrosine residues. Autophosphorylation occurs in trans between the two FGFR molecules present in the dimer. In terms of processing, N-glycosylated in the endoplasmic reticulum. The N-glycan chains undergo further maturation to an Endo H-resistant form in the Golgi apparatus. Ubiquitinated. FGFR2 is rapidly ubiquitinated after autophosphorylation, leading to internalization and degradation. Subject to degradation both in lysosomes and by the proteasome. In terms of tissue distribution, expressed in the anterior neural plate in early neurula stage embryos. Later in development, the protein is also expressed in the eye anlagen, midbrain-hindbrain boundary and otic vesicle.

It localises to the cell membrane. It is found in the golgi apparatus. The protein localises to the cytoplasmic vesicle. It catalyses the reaction L-tyrosyl-[protein] + ATP = O-phospho-L-tyrosyl-[protein] + ADP + H(+). Present in an inactive conformation in the absence of bound ligand. Ligand binding leads to dimerization and activation by autophosphorylation on tyrosine residues. In terms of biological role, tyrosine-protein kinase that acts as a cell-surface receptor for fibroblast growth factors and plays an essential role in the regulation of cell proliferation, differentiation, migration and apoptosis, and in the regulation of embryonic development. Required for normal embryonic patterning, limb bud development, lung morphogenesis, osteogenesis and skin development. Plays an essential role in the regulation of osteoblast differentiation, proliferation and apoptosis, and is required for normal skeleton development. Promotes cell proliferation in keratinocytes and immature osteoblasts, but promotes apoptosis in differentiated osteoblasts. Phosphorylates PLCG1, FRS2 and PAK4. Ligand binding leads to the activation of several signaling cascades. Activation of PLCG1 leads to the production of the cellular signaling molecules diacylglycerol and inositol 1,4,5-trisphosphate. Phosphorylation of FRS2 triggers recruitment of GRB2, GAB1, PIK3R1 and SOS1, and mediates activation of RAS, MAPK1/ERK2, MAPK3/ERK1 and the MAP kinase signaling pathway, as well as of the AKT1 signaling pathway. FGFR2 signaling is down-regulated by ubiquitination, internalization and degradation. Mutations that lead to constitutive kinase activation or impair normal FGFR2 maturation, internalization and degradation lead to aberrant signaling. Over-expressed FGFR2 promotes activation of STAT1. This is Fibroblast growth factor receptor 2 (fgfr2) from Xenopus laevis (African clawed frog).